Reading from the N-terminus, the 404-residue chain is MKNPIYLDYAATTPVEFKVAKKMMNYLTIDGIFGNPASRSHKFGWEAEEVIDIARNEISELIGSDSREIVFTSGATEANNLAIKGIAFFHRKKGNHIITSKTEHKSVLDACRYLESVGFSVTYLTPKNNGIIDLNDLKKNINKNTILVSIMHVNNETGIIQDITNISKICRSHDIFFHVDATQSVGKIAINLKNLFVDLMSFSAHKIYGPKGIGGLYVRRKPRVRLSALSHGGGHERGMRAGTLPVHQIVGMGESFKLARKKINDDFIHLTNLRNDLWNGIKNIEEVYLNSDLKQGAPHILNVSFNYIEGESLIMALKDLAISSGSACTSSSLEPSYVLRALGIKDELAHSSIRFSIGRFTTKEEIQHTVKSVHKSIHRLRALSPLWEMFKSGVDLNSIEWDHT.

Pyridoxal 5'-phosphate contacts are provided by residues 75 to 76, Asn155, Gln183, and 203 to 205; these read AT and SAH. Lys206 carries the post-translational modification N6-(pyridoxal phosphate)lysine. Residue Thr243 coordinates pyridoxal 5'-phosphate. The active-site Cysteine persulfide intermediate is the Cys328. Cys328 provides a ligand contact to [2Fe-2S] cluster.

Belongs to the class-V pyridoxal-phosphate-dependent aminotransferase family. NifS/IscS subfamily. As to quaternary structure, homodimer. Forms a heterotetramer with IscU, interacts with other sulfur acceptors. Requires pyridoxal 5'-phosphate as cofactor.

The protein resides in the cytoplasm. It catalyses the reaction (sulfur carrier)-H + L-cysteine = (sulfur carrier)-SH + L-alanine. The protein operates within cofactor biosynthesis; iron-sulfur cluster biosynthesis. In terms of biological role, master enzyme that delivers sulfur to a number of partners involved in Fe-S cluster assembly, tRNA modification or cofactor biosynthesis. Catalyzes the removal of elemental sulfur atoms from cysteine to produce alanine. Functions as a sulfur delivery protein for Fe-S cluster synthesis onto IscU, an Fe-S scaffold assembly protein, as well as other S acceptor proteins. The chain is Cysteine desulfurase IscS from Buchnera aphidicola subsp. Schizaphis graminum (strain Sg).